Reading from the N-terminus, the 355-residue chain is D-alanine--D-alanine ligase (355 aa).

Residues 143–350 (KTIFSNLKIP…IEQLVAKLVD (208 aa)) form the ATP-grasp domain. Position 178-233 (178-233 (IKKLNFPVFVKPSNSGSSLGISKVINKSALLKALEKAWEIDARILVEEGLETREIE)) interacts with ATP. 3 residues coordinate Mg(2+): D303, E317, and N319.

Belongs to the D-alanine--D-alanine ligase family. The cofactor is Mg(2+). Mn(2+) serves as cofactor.

The protein resides in the cytoplasm. The catalysed reaction is 2 D-alanine + ATP = D-alanyl-D-alanine + ADP + phosphate + H(+). It functions in the pathway cell wall biogenesis; peptidoglycan biosynthesis. Its function is as follows. Cell wall formation. In Prochlorococcus marinus (strain MIT 9312), this protein is D-alanine--D-alanine ligase.